The sequence spans 431 residues: Phosphoribosylamine--glycine ligase (431 aa).

One can recognise an ATP-grasp domain in the interval lysine 108–alanine 315. Leucine 134–serine 195 is an ATP binding site. Mg(2+) is bound by residues glutamate 285 and asparagine 287.

The protein belongs to the GARS family. It depends on Mg(2+) as a cofactor. Requires Mn(2+) as cofactor.

It catalyses the reaction 5-phospho-beta-D-ribosylamine + glycine + ATP = N(1)-(5-phospho-beta-D-ribosyl)glycinamide + ADP + phosphate + H(+). It functions in the pathway purine metabolism; IMP biosynthesis via de novo pathway; N(1)-(5-phospho-D-ribosyl)glycinamide from 5-phospho-alpha-D-ribose 1-diphosphate: step 2/2. The chain is Phosphoribosylamine--glycine ligase from Pseudomonas syringae pv. tomato (strain ATCC BAA-871 / DC3000).